The following is a 182-amino-acid chain: Ribosome-recycling factor (182 aa).

This sequence belongs to the RRF family.

Its subcellular location is the cytoplasm. Responsible for the release of ribosomes from messenger RNA at the termination of protein biosynthesis. May increase the efficiency of translation by recycling ribosomes from one round of translation to another. The sequence is that of Ribosome-recycling factor from Cyanothece sp. (strain PCC 7425 / ATCC 29141).